Reading from the N-terminus, the 1071-residue chain is Methionine S-methyltransferase (1071 aa).

Ala2 carries the N-acetylalanine modification.

It belongs to the class I-like SAM-binding methyltransferase superfamily. Homotetramer. As to expression, expressed in roots, rosette leaves and cauline leaves. Expressed at a lower level in developing seeds.

The protein resides in the cytoplasm. It catalyses the reaction L-methionine + S-adenosyl-L-methionine = S-methyl-L-methionine + S-adenosyl-L-homocysteine. Catalyzes the S-methylmethionine (SMM) biosynthesis from adenosyl-L-homocysteine (AdoMet) and methionine. SMM biosynthesis (by MMT1) and degradation (by HMT-1, HMT-2 and HMT-3) constitute the SMM cycle in plants, which is probably required to achieve short term control of AdoMet level. Also able to catalyze the selenium-methylmethionine (SeMM) from AdoMet and selenium-methionine (SeMet). May play a role in phoem sulfur transport; such function is however not essential. The chain is Methionine S-methyltransferase (MMT1) from Arabidopsis thaliana (Mouse-ear cress).